Consider the following 465-residue polypeptide: UPF0422 protein CBU_0937 (465 aa).

Positions 1–23 are cleaved as a signal peptide; that stretch reads MTSKLVISALGLCVSGALSTTLA. Residues 28 to 60 are a coiled coil; sequence TTNQQITKRIDYLQAQINELRTQQKKERQKKKA.

It belongs to the UPF0422 family.

In Coxiella burnetii (strain RSA 493 / Nine Mile phase I), this protein is UPF0422 protein CBU_0937.